Consider the following 523-residue polypeptide: MGARSLTLLYLLCCLVVGLIAGFGEEEERSCDPIRITMCQNLGYNVTKMPNLVGHELQADAELQLTTFTPLIQYGCSSQLQFFLCSVYVPMCTEKINIPIGPCGGMCLSVKRRCEPVLKEFGFAWPESLNCSKFPPQNDHNHMCMEGPGDDEVPAHSKTPVLPGEDCNSFGPNSDQYTWVKRSMNCVLKCGYDSGLYNRLSKEFTDIWMAVWASLCFISTAFTVLTFLIDSSRFCYPERPIIFLSMCYNIYSIAYIVRLTVGRERISCDFEEAAEPVLIQEGLKNTGCAIIFLLMYFFGMASSIWWVILTLTWFLAAGLKWGHEAIEMHSSYFHIAAWAIPAVKTIVILIMRLVDADELTGLCYVGNQNIDALTGFVVAPLFTYLVIGTLFIAAGLVALFKIRSNLQKDGTKTDKLERLMVKIGVFSVLYTVPATCVIACYFYEVSNWNVFRYTADDSNMAVEMLNIFMSLLVGITSGMWIWSAKTLHTWQKCTNRLVNSGKVKRKKRVDGWVKPGKGNETVV.

Residues M1–G22 form the signal peptide. Over F23–N198 the chain is Extracellular. Residues E26 to G147 enclose the FZ domain. 8 disulfides stabilise this stretch: C31–C92, C39–C85, C76–C114, C103–C144, C107–C131, C167–C186, C190–C268, and C288–C363. The N-linked (GlcNAc...) asparagine glycan is linked to N45. N-linked (GlcNAc...) asparagine glycosylation occurs at N130. Residues R199–I229 traverse the membrane as a helical segment. The Cytoplasmic segment spans residues D230–C235. A helical membrane pass occupies residues Y236–V261. At G262–N285 the chain is on the extracellular side. The chain crosses the membrane as a helical span at residues T286–L319. Over K320–G322 the chain is Cytoplasmic. Residues H323–M351 traverse the membrane as a helical segment. Residues R352–N369 are Extracellular-facing. Residues I370–L396 form a helical membrane-spanning segment. Residues V397–E417 are Cytoplasmic-facing. Residues R418 to Y443 form a helical membrane-spanning segment. Residues E444–N459 are Extracellular-facing. Residues M460–I481 form a helical membrane-spanning segment. The Cytoplasmic portion of the chain corresponds to W482–V523. Residues K485–W490 carry the Lys-Thr-X-X-X-Trp motif, mediates interaction with the PDZ domain of Dvl family members motif. Residues T521–V523 carry the PDZ-binding motif.

Belongs to the G-protein coupled receptor Fz/Smo family. In terms of assembly, interacts (via FZ domain) with tsku; tsku competes with wnt2b for binding to fzd4, inhibiting Wnt signaling and repressing peripheral eye development.

It localises to the cell membrane. Its function is as follows. Receptor for Wnt proteins. Most frizzled receptors are coupled to the beta-catenin canonical signaling pathway, which leads to the activation of disheveled proteins, inhibition of GSK-3 kinase, nuclear accumulation of beta-catenin and activation of Wnt target genes. A second signaling pathway involving PKC and calcium fluxes has been seen for some family members, but it is not yet clear if it represents a distinct pathway or if it can be integrated in the canonical pathway, as PKC seems to be required for Wnt-mediated inactivation of GSK-3 kinase. Both pathways seem to involve interactions with G-proteins. May be involved in transduction and intercellular transmission of polarity information during tissue morphogenesis and/or in differentiated tissues. Activated by Wnt5A. This is Frizzled-4 (fzd4) from Xenopus laevis (African clawed frog).